Consider the following 381-residue polypeptide: 2-epi-5-epi-valiolone synthase (381 aa).

NAD(+) is bound by residues Asp50, 81 to 84 (EEAK), 114 to 118 (GIVLD), 138 to 139 (TS), Lys151, Lys160, and 178 to 181 (FLDT). The active site involves Lys151. 3 residues coordinate a divalent metal cation: Glu193, His264, and His280.

Belongs to the sugar phosphate cyclases superfamily. EEVS family. The cofactor is NAD(+). Co(2+) is required as a cofactor.

The enzyme catalyses D-sedoheptulose 7-phosphate = 2-epi-5-epi-valiolone + phosphate. It functions in the pathway antibiotic biosynthesis. Catalyzes the cyclization of D-sedoheptulose 7-phosphate to 2-epi-5-epi-valiolone. Involved in cetoniacytone A biosynthesis. The polypeptide is 2-epi-5-epi-valiolone synthase (Actinomyces sp).